We begin with the raw amino-acid sequence, 474 residues long: Glutamate--tRNA ligase (474 aa).

The short motif at 9-19 is the 'HIGH' region element; that stretch reads PSPTGYLHVGG. The 'KMSKS' region signature appears at 240-244; it reads KLSKR. Lys-243 serves as a coordination point for ATP.

Belongs to the class-I aminoacyl-tRNA synthetase family. Glutamate--tRNA ligase type 1 subfamily. As to quaternary structure, monomer.

It is found in the cytoplasm. The catalysed reaction is tRNA(Glu) + L-glutamate + ATP = L-glutamyl-tRNA(Glu) + AMP + diphosphate. Catalyzes the attachment of glutamate to tRNA(Glu) in a two-step reaction: glutamate is first activated by ATP to form Glu-AMP and then transferred to the acceptor end of tRNA(Glu). The sequence is that of Glutamate--tRNA ligase from Vibrio parahaemolyticus serotype O3:K6 (strain RIMD 2210633).